A 186-amino-acid polypeptide reads, in one-letter code: Elongation factor P (186 aa).

The protein belongs to the elongation factor P family.

Its subcellular location is the cytoplasm. The protein operates within protein biosynthesis; polypeptide chain elongation. Functionally, involved in peptide bond synthesis. Stimulates efficient translation and peptide-bond synthesis on native or reconstituted 70S ribosomes in vitro. Probably functions indirectly by altering the affinity of the ribosome for aminoacyl-tRNA, thus increasing their reactivity as acceptors for peptidyl transferase. This Coprothermobacter proteolyticus (strain ATCC 35245 / DSM 5265 / OCM 4 / BT) protein is Elongation factor P.